Here is a 505-residue protein sequence, read N- to C-terminus: ATP synthase subunit alpha (505 aa).

Residue 171 to 178 (GDRQTGKT) participates in ATP binding.

Belongs to the ATPase alpha/beta chains family. In terms of assembly, F-type ATPases have 2 components, CF(1) - the catalytic core - and CF(0) - the membrane proton channel. CF(1) has five subunits: alpha(3), beta(3), gamma(1), delta(1), epsilon(1). CF(0) has three main subunits: a(1), b(2) and c(9-12). The alpha and beta chains form an alternating ring which encloses part of the gamma chain. CF(1) is attached to CF(0) by a central stalk formed by the gamma and epsilon chains, while a peripheral stalk is formed by the delta and b chains.

It is found in the cell inner membrane. The catalysed reaction is ATP + H2O + 4 H(+)(in) = ADP + phosphate + 5 H(+)(out). Its function is as follows. Produces ATP from ADP in the presence of a proton gradient across the membrane. The alpha chain is a regulatory subunit. This Campylobacter curvus (strain 525.92) protein is ATP synthase subunit alpha.